Reading from the N-terminus, the 496-residue chain is Glycerol kinase (496 aa).

Residue Thr-11 coordinates ADP. Residues Thr-11, Ser-12, and Ser-13 each contribute to the ATP site. Residue Thr-11 coordinates sn-glycerol 3-phosphate. Arg-15 is an ADP binding site. The sn-glycerol 3-phosphate site is built by Arg-81, Glu-82, Tyr-133, and Asp-242. Residues Arg-81, Glu-82, Tyr-133, Asp-242, and Gln-243 each coordinate glycerol. Residues Thr-264 and Gly-307 each coordinate ADP. 4 residues coordinate ATP: Thr-264, Gly-307, Gln-311, and Gly-412. The ADP site is built by Gly-412 and Asn-416.

Belongs to the FGGY kinase family.

It carries out the reaction glycerol + ATP = sn-glycerol 3-phosphate + ADP + H(+). Its pathway is polyol metabolism; glycerol degradation via glycerol kinase pathway; sn-glycerol 3-phosphate from glycerol: step 1/1. Its activity is regulated as follows. Inhibited by fructose 1,6-bisphosphate (FBP). In terms of biological role, key enzyme in the regulation of glycerol uptake and metabolism. Catalyzes the phosphorylation of glycerol to yield sn-glycerol 3-phosphate. The polypeptide is Glycerol kinase (Albidiferax ferrireducens (strain ATCC BAA-621 / DSM 15236 / T118) (Rhodoferax ferrireducens)).